The following is a 207-amino-acid chain: MNTEEIPVAPPLRGVTPALQWKVNNYSFGTRQARKLFPHYHPPTWLGNLYLPLRGMPHTGPGCYAAATDWNGLAYNLSKVPTSTKGYAIGARTAVRFKPISKDVTPYPGMYQKVDTLSEKHKKSFAPFNILMPRFRSAAKGDSYPGPGTYNPEMKSVPKVTWPMKFGSPDWSQVPCLEKRTLKAELSADKDFRKHRSRVAYFSLYYQ.

In terms of assembly, interacts with proteins involved in ciliary transport, including ARL13B, CETN1, KIF3A, RAB6A, RAB8A, TUBB1 and TUBG1. Interacts with AURKA. In terms of tissue distribution, expressed in tissues rich in ciliated cells, such as lung, kidney, vas deferens and testis. Both isoforms 1 and 2 are expressed in testis.

It is found in the golgi apparatus. The protein resides in the golgi stack. It localises to the trans-Golgi network. The protein localises to the nucleus. Its subcellular location is the cytoplasm. It is found in the cytoplasmic vesicle. During primary cilia disassembly, involved in cilia disassembly. Required specifically to control cilia retraction as well as the liberation and duplication of the basal body/centrosome. May act by stimulating AURKA activity at the basal body in a cell cycle-dependent manner. The chain is Ciliary microtubule-associated protein 3 (Cimap3) from Mus musculus (Mouse).